Reading from the N-terminus, the 274-residue chain is Large ribosomal subunit protein uL2 (274 aa).

Disordered regions lie at residues 28–54 and 221–274; these read KPFAPLLEKNSKTGGRNNNGRITTRHI and RGTA…RSKK. Residues 39–49 are compositionally biased toward polar residues; that stretch reads KTGGRNNNGRI.

Belongs to the universal ribosomal protein uL2 family. Part of the 50S ribosomal subunit. Forms a bridge to the 30S subunit in the 70S ribosome.

Its function is as follows. One of the primary rRNA binding proteins. Required for association of the 30S and 50S subunits to form the 70S ribosome, for tRNA binding and peptide bond formation. It has been suggested to have peptidyltransferase activity; this is somewhat controversial. Makes several contacts with the 16S rRNA in the 70S ribosome. This chain is Large ribosomal subunit protein uL2, found in Edwardsiella ictaluri (strain 93-146).